We begin with the raw amino-acid sequence, 301 residues long: Pantothenate synthetase (301 aa).

An ATP-binding site is contributed by 30–37 (MGNLHEGH). His37 acts as the Proton donor in catalysis. A (R)-pantoate-binding site is contributed by Gln61. Residue Gln61 coordinates beta-alanine. 149–152 (GEKD) contributes to the ATP binding site. A (R)-pantoate-binding site is contributed by Gln155. ATP contacts are provided by residues Val178 and 186–189 (MSSR).

Belongs to the pantothenate synthetase family. In terms of assembly, homodimer.

The protein localises to the cytoplasm. It catalyses the reaction (R)-pantoate + beta-alanine + ATP = (R)-pantothenate + AMP + diphosphate + H(+). It functions in the pathway cofactor biosynthesis; (R)-pantothenate biosynthesis; (R)-pantothenate from (R)-pantoate and beta-alanine: step 1/1. Functionally, catalyzes the condensation of pantoate with beta-alanine in an ATP-dependent reaction via a pantoyl-adenylate intermediate. The chain is Pantothenate synthetase from Vibrio parahaemolyticus serotype O3:K6 (strain RIMD 2210633).